The chain runs to 246 residues: tRNA pseudouridine synthase A (246 aa).

Catalysis depends on Asp52, which acts as the Nucleophile. Tyr111 is a binding site for substrate.

It belongs to the tRNA pseudouridine synthase TruA family. In terms of assembly, homodimer.

The enzyme catalyses uridine(38/39/40) in tRNA = pseudouridine(38/39/40) in tRNA. Functionally, formation of pseudouridine at positions 38, 39 and 40 in the anticodon stem and loop of transfer RNAs. The chain is tRNA pseudouridine synthase A from Parvibaculum lavamentivorans (strain DS-1 / DSM 13023 / NCIMB 13966).